The following is a 116-amino-acid chain: uncharacterized protein (116 aa).

The disordered stretch occupies residues 97–116 (AKGKGNEGREEAEEASGKSK). Basic and acidic residues predominate over residues 100–116 (KGNEGREEAEEASGKSK).

Belongs to the UPF0440 family.

This is an uncharacterized protein from Pyrococcus horikoshii (strain ATCC 700860 / DSM 12428 / JCM 9974 / NBRC 100139 / OT-3).